The following is a 611-amino-acid chain: MAU2 chromatid cohesion factor homolog (611 aa).

TPR repeat units follow at residues 11-46 (YAGL…NPPP), 91-124 (FEAS…TSGE), 131-164 (FRLF…AEQC), 371-404 (PILH…ADNP), and 490-523 (ACSL…SGKI). Residues 581 to 611 (WTGAVSPTKSSTIPPQQSFQTWSQPGPSRLS) form a disordered region. Positions 585-611 (VSPTKSSTIPPQQSFQTWSQPGPSRLS) are enriched in polar residues.

This sequence belongs to the SCC4/mau-2 family. In terms of assembly, component of the cohesin loading complex.

It is found in the nucleus. Its subcellular location is the nucleoplasm. Functionally, required for association of the cohesin complex with chromatin during interphase. Plays a role in sister chromatid cohesion and normal progression through prometaphase. In Nematostella vectensis (Starlet sea anemone), this protein is MAU2 chromatid cohesion factor homolog.